The following is a 107-amino-acid chain: Large ribosomal subunit protein uL23 (107 aa).

It belongs to the universal ribosomal protein uL23 family. Part of the 50S ribosomal subunit. Contacts protein L29, and trigger factor when it is bound to the ribosome.

In terms of biological role, one of the early assembly proteins it binds 23S rRNA. One of the proteins that surrounds the polypeptide exit tunnel on the outside of the ribosome. Forms the main docking site for trigger factor binding to the ribosome. The sequence is that of Large ribosomal subunit protein uL23 from Gluconobacter oxydans (strain 621H) (Gluconobacter suboxydans).